Here is a 372-residue protein sequence, read N- to C-terminus: Spermidine/putrescine import ATP-binding protein PotA (372 aa).

Residues Val-12–Ile-250 enclose the ABC transporter domain. Gly-48–Thr-55 contacts ATP.

This sequence belongs to the ABC transporter superfamily. Spermidine/putrescine importer (TC 3.A.1.11.1) family. As to quaternary structure, the complex is composed of two ATP-binding proteins (PotA), two transmembrane proteins (PotB and PotC) and a solute-binding protein (PotD).

It localises to the cell inner membrane. It catalyses the reaction ATP + H2O + polyamine-[polyamine-binding protein]Side 1 = ADP + phosphate + polyamineSide 2 + [polyamine-binding protein]Side 1.. Functionally, part of the ABC transporter complex PotABCD involved in spermidine/putrescine import. Responsible for energy coupling to the transport system. In Pseudomonas fluorescens (strain ATCC BAA-477 / NRRL B-23932 / Pf-5), this protein is Spermidine/putrescine import ATP-binding protein PotA.